Here is a 498-residue protein sequence, read N- to C-terminus: Minor fimbrium subunit Mfa1 (498 aa).

The signal sequence occupies residues 1-19; it reads MKLNKMFLVGALLSLGFAS. A lipid anchor (N-palmitoyl cysteine) is attached at cysteine 20. A lipid anchor (S-diacylglycerol cysteine) is attached at cysteine 20. Positions 20-50 are excised as a propeptide; the sequence is CSKEGNGPAPDSSSTADTHMSVSMSLPQHNR. The interval 436 to 476 is disordered; that stretch reads SGNPFVPTDPDPNNPDTPDNPDTPDPEDPDTPNPEEPLPVQ.

This sequence belongs to the bacteroidetes fimbrillin superfamily. FimA/Mfa1 family. In terms of assembly, structural component of the fimbrial stalk. Minor fimbriae are composed of a structural subunit, most often Mfa1, and the accessory subunits Mfa3, Mfa4 and Mfa5. Mfa1 interacts with Mfa2; this anchors the fimbrium in the membrane. Fimbrium assembly occurs by linear, head-to-tail oligomerization of fimbrial subunits. This is mediated via insertion of a C-terminal beta-strand from one subunit into a groove in the N-terminal domain of the following subunit.

It localises to the fimbrium. It is found in the cell outer membrane. Structural subunit of the minor fimbriae. These filamentous pili are attached to the cell surface; they mediate biofilm formation, adhesion onto host cells and onto other bacteria that are part of the oral microbiome. They play an important role in invasion of periodontal tissues and are recognized as major virulence factors. Mfa1 orthologs from different strains have highly divergent sequences, and this correlates with pathogenicity. This is Minor fimbrium subunit Mfa1 from Porphyromonas gingivalis (Bacteroides gingivalis).